A 122-amino-acid chain; its full sequence is Basic phospholipase A2 (122 aa).

7 cysteine pairs are disulfide-bonded: cysteine 26–cysteine 115, cysteine 28–cysteine 44, cysteine 43–cysteine 95, cysteine 49–cysteine 122, cysteine 50–cysteine 88, cysteine 57–cysteine 81, and cysteine 75–cysteine 86. Ca(2+)-binding residues include tyrosine 27, glycine 29, and glycine 31. Histidine 47 is a catalytic residue. Aspartate 48 contacts Ca(2+). Aspartate 89 is a catalytic residue.

The protein belongs to the phospholipase A2 family. Group II subfamily. D49 sub-subfamily. The cofactor is Ca(2+). In terms of tissue distribution, expressed by the venom gland.

Its subcellular location is the secreted. The catalysed reaction is a 1,2-diacyl-sn-glycero-3-phosphocholine + H2O = a 1-acyl-sn-glycero-3-phosphocholine + a fatty acid + H(+). Snake venom phospholipase A2 (PLA2) that does not inhibit platelet aggregation. Exhibits cytotoxic and anticoagulant activity. Induces Ehrlich tumor growth but not angiogenesis. PLA2 catalyzes the calcium-dependent hydrolysis of the 2-acyl groups in 3-sn-phosphoglycerides. In Bothrops leucurus (Whitetail lancehead), this protein is Basic phospholipase A2.